We begin with the raw amino-acid sequence, 1121 residues long: tRNA (34-2'-O)-methyltransferase regulator WDR6 (1121 aa).

Methionine 1 is subject to N-acetylmethionine. WD repeat units lie at residues 53-97 (IKRV…VVKI), 105-143 (WELW…LYDP), 147-189 (CILQ…VWYP), 200-238 (APDR…IWKV), 247-285 (RVQN…VWSH), 289-327 (ILQA…LWHL), 335-376 (LGVS…LYDV), 381-422 (WEQL…VVPI), 425-470 (PTAA…ISAA), 476-520 (IFVK…LFPS), 559-598 (PVST…FVRD), 604-642 (VLRQ…VWNP), 645-684 (HEKL…LYRA), 739-785 (LTDI…VWGI), 848-893 (RNRH…LFLL), 901-946 (QLLA…FWDL), 970-1012 (GTPS…VFVL), 1036-1073 (EEYS…FWRL), and 1079-1121 (TFMN…NWYD).

This sequence belongs to the WD repeat WDR6 family. In terms of assembly, interacts with FTSJ1; the interaction is direct, and required for 2'-O-methylation of position 34 in substrate tRNAs. Interacts with IRS4. Interacts with STK11/LKB1. In terms of tissue distribution, ubiquitous.

It localises to the cytoplasm. Together with methyltransferase FTSJ1, methylates the 2'-O-ribose of nucleotides at position 34 of the tRNA anticodon loop of substrate tRNAs. Required for the correct positioning of the substrate tRNA for methylation. Required to suppress amino acid starvation-induced autophagy. Enhances the STK11/LKB1-induced cell growth suppression activity. In Homo sapiens (Human), this protein is tRNA (34-2'-O)-methyltransferase regulator WDR6 (WDR6).